Here is a 351-residue protein sequence, read N- to C-terminus: Very-long-chain 3-oxoacyl-CoA reductase (351 aa).

The chain crosses the membrane as a helical span at residues 26-46 (LLWCAFTVGAVKLTTFMLSLI). Residues Leu72, Asp126, Asn153, Tyr225, Lys229, Val258, and Ser260 each coordinate NADP(+). Tyr225 (proton donor) is an active-site residue. The active-site Lowers pKa of active site Tyr is the Lys229.

The protein belongs to the short-chain dehydrogenases/reductases (SDR) family.

Its subcellular location is the endoplasmic reticulum membrane. It carries out the reaction a very-long-chain (3R)-3-hydroxyacyl-CoA + NADP(+) = a very-long-chain 3-oxoacyl-CoA + NADPH + H(+). It participates in lipid metabolism; fatty acid biosynthesis. Functionally, component of the microsomal membrane bound fatty acid elongation system, which produces the 26-carbon very long-chain fatty acids (VLCFA) from palmitate. Catalyzes the reduction of the 3-ketoacyl-CoA intermediate that is formed in each cycle of fatty acid elongation. VLCFAs serve as precursors for ceramide and sphingolipids. In Eremothecium gossypii (strain ATCC 10895 / CBS 109.51 / FGSC 9923 / NRRL Y-1056) (Yeast), this protein is Very-long-chain 3-oxoacyl-CoA reductase.